Consider the following 31-residue polypeptide: Cytochrome b6-f complex subunit 6 (31 aa).

Residues 4–26 (ITSYFGFLLAASTITPALLIGLN) traverse the membrane as a helical segment.

The protein belongs to the PetL family. In terms of assembly, the 4 large subunits of the cytochrome b6-f complex are cytochrome b6, subunit IV (17 kDa polypeptide, PetD), cytochrome f and the Rieske protein, while the 4 small subunits are PetG, PetL, PetM and PetN. The complex functions as a dimer.

The protein resides in the plastid. It is found in the chloroplast thylakoid membrane. Its function is as follows. Component of the cytochrome b6-f complex, which mediates electron transfer between photosystem II (PSII) and photosystem I (PSI), cyclic electron flow around PSI, and state transitions. PetL is important for photoautotrophic growth as well as for electron transfer efficiency and stability of the cytochrome b6-f complex. In Calycanthus floridus var. glaucus (Eastern sweetshrub), this protein is Cytochrome b6-f complex subunit 6.